A 388-amino-acid chain; its full sequence is MQLSLLVGLVCFSAINAKIYFKEDFSDDDWEKRWIKSKHKDDFGKWEISHGKFYGDAVKDKGLKTTQDAKFYSIGAKFDKSFSNKGKSLVIQFSVKHEQDIDCGGGYVKLMASDVNLEDSHGETPYHIMFGPDICGPGTKKVHVIFHYKDRNHMIKKDIRCKDDVFTHLYTLIVNSDNTYEVQIDGEKAESGELEADWDFLPPKKIKDPDAKKPEDWDEREFIDDEDDKKPEDWDKPEHIPDPDAKKPEDWDDEMDGEWEPPMVDNPEYKGEWKPKQKKNPAYKGKWIHPEIEIPDYTPDDNLYVYDDIGAIGFDLWQVKSGTIFDDVIVTDSVEEAKKFGEKTLKITREGEKKKGKKTKKQKKKEKNEKIKKEKMKKRKRANRKKKK.

An N-terminal signal peptide occupies residues 1 to 17 (MQLSLLVGLVCFSAINA). C103 and C135 are joined by a disulfide. Residues Y107, K109, Y126, and D133 each coordinate an alpha-D-glucoside. Repeat copies occupy residues 189 to 200 (AESGELEADWDF), 208 to 219 (DPDAKKPEDWDE), 225 to 236 (DEDDKKPEDWDK), 242 to 253 (DPDAKKPEDWDD), 257 to 267 (GEWEPPMVDNP), 271 to 281 (GEWKPKQKKNP), and 285 to 295 (GKWIHPEIEIP). The 4 X approximate repeats stretch occupies residues 189 to 253 (AESGELEADW…DAKKPEDWDD (65 aa)). The disordered stretch occupies residues 193 to 282 (ELEADWDFLP…WKPKQKKNPA (90 aa)). Positions 205-215 (KIKDPDAKKPE) are enriched in basic and acidic residues. Residues 216–227 (DWDEREFIDDED) are compositionally biased toward acidic residues. A compositionally biased stretch (basic and acidic residues) spans 228-249 (DKKPEDWDKPEHIPDPDAKKPE). Acidic residues predominate over residues 250–259 (DWDDEMDGEW). Residues 257 to 295 (GEWEPPMVDNPEYKGEWKPKQKKNPAYKGKWIHPEIEIP) are 3 X approximate repeats. D315 serves as a coordination point for an alpha-D-glucoside. Positions 349–388 (REGEKKKGKKTKKQKKKEKNEKIKKEKMKKRKRANRKKKK) are disordered. Basic residues-rich tracts occupy residues 354-365 (KKGKKTKKQKKK) and 373-388 (KEKMKKRKRANRKKKK).

This sequence belongs to the calreticulin family.

It localises to the endoplasmic reticulum lumen. Molecular calcium-binding chaperone promoting folding, oligomeric assembly and quality control in the ER via the calreticulin/calnexin cycle. This lectin may interact transiently with almost all of the monoglucosylated glycoproteins that are synthesized in the ER. This is Calreticulin (crt-1) from Onchocerca volvulus.